We begin with the raw amino-acid sequence, 476 residues long: Glucan endo-1,3-beta-glucosidase 9 (476 aa).

An N-terminal signal peptide occupies residues 1–25; that stretch reads MARRLFLLLLAVTAGLSLTGTTVRA. N-linked (GlcNAc...) asparagine glycans are attached at residues N88 and N101. E122 serves as the catalytic Proton donor. Residues N184, N216, N277, N320, N342, N374, and N405 are each glycosylated (N-linked (GlcNAc...) asparagine). C364 and C424 are joined by a disulfide. S453 is lipidated: GPI-anchor amidated serine. Residues 454-476 constitute a propeptide, removed in mature form; sequence SSQTPNFFQSWPLLLLFLLSGLF.

Belongs to the glycosyl hydrolase 17 family. In terms of processing, contains two additional disulfide bonds.

The protein resides in the secreted. It is found in the cell wall. The protein localises to the cell membrane. The enzyme catalyses Hydrolysis of (1-&gt;3)-beta-D-glucosidic linkages in (1-&gt;3)-beta-D-glucans.. The protein is Glucan endo-1,3-beta-glucosidase 9 of Arabidopsis thaliana (Mouse-ear cress).